Reading from the N-terminus, the 250-residue chain is tRNA (guanine-N(1)-)-methyltransferase (250 aa).

Residues G113 and 133–138 (IGDYVL) each bind S-adenosyl-L-methionine.

It belongs to the RNA methyltransferase TrmD family. As to quaternary structure, homodimer.

The protein localises to the cytoplasm. The catalysed reaction is guanosine(37) in tRNA + S-adenosyl-L-methionine = N(1)-methylguanosine(37) in tRNA + S-adenosyl-L-homocysteine + H(+). Functionally, specifically methylates guanosine-37 in various tRNAs. The polypeptide is tRNA (guanine-N(1)-)-methyltransferase (Shewanella amazonensis (strain ATCC BAA-1098 / SB2B)).